The sequence spans 168 residues: Tyrosine-protein phosphatase (168 aa).

The region spanning 24–168 is the Tyrosine-protein phosphatase domain; it reads FKTPLRPELF…RQNYVQDLLI (145 aa). Cys119 acts as the Phosphocysteine intermediate in catalysis.

The protein belongs to the protein-tyrosine phosphatase family. Non-receptor class CDC14 subfamily.

The catalysed reaction is O-phospho-L-tyrosyl-[protein] + H2O = L-tyrosyl-[protein] + phosphate. Its function is as follows. Plays a role in the regulation and processing of late viral mRNAs by displaying RNA 5'-triphosphatase and diphosphatase activities. In Autographa californica nuclear polyhedrosis virus (AcMNPV), this protein is Tyrosine-protein phosphatase (PTP).